We begin with the raw amino-acid sequence, 514 residues long: Peptide chain release factor 3 (514 aa).

Residues 8 to 268 enclose the tr-type G domain; sequence KKRRTFAIIS…TFLKFAPEPH (261 aa). Residues 17-24, 85-89, and 139-142 each bind GTP; these read SHPDAGKT, DTPGH, and NKLD.

Belongs to the TRAFAC class translation factor GTPase superfamily. Classic translation factor GTPase family. PrfC subfamily.

The protein localises to the cytoplasm. Increases the formation of ribosomal termination complexes and stimulates activities of RF-1 and RF-2. It binds guanine nucleotides and has strong preference for UGA stop codons. It may interact directly with the ribosome. The stimulation of RF-1 and RF-2 is significantly reduced by GTP and GDP, but not by GMP. In Streptococcus thermophilus (strain ATCC BAA-491 / LMD-9), this protein is Peptide chain release factor 3.